We begin with the raw amino-acid sequence, 248 residues long: Probable transcriptional regulatory protein blr1534 (248 aa).

The tract at residues 1–21 is disordered; that stretch reads MAGHSQFKNIMHRKGRQDAQK.

The protein belongs to the TACO1 family.

The protein resides in the cytoplasm. The sequence is that of Probable transcriptional regulatory protein blr1534 from Bradyrhizobium diazoefficiens (strain JCM 10833 / BCRC 13528 / IAM 13628 / NBRC 14792 / USDA 110).